Consider the following 252-residue polypeptide: 5-oxoprolinase subunit A (252 aa).

It belongs to the LamB/PxpA family. As to quaternary structure, forms a complex composed of PxpA, PxpB and PxpC.

The catalysed reaction is 5-oxo-L-proline + ATP + 2 H2O = L-glutamate + ADP + phosphate + H(+). Its function is as follows. Catalyzes the cleavage of 5-oxoproline to form L-glutamate coupled to the hydrolysis of ATP to ADP and inorganic phosphate. This is 5-oxoprolinase subunit A from Bacillus cytotoxicus (strain DSM 22905 / CIP 110041 / 391-98 / NVH 391-98).